The sequence spans 146 residues: Large ribosomal subunit protein uL15 (146 aa).

Basic and acidic residues predominate over residues 1-13 (MKLNELKPNEGSR). A disordered region spans residues 1-54 (MKLNELKPNEGSRRNRKRVGRGTSSGYGKTAGRGQKGQLARTGGKTRLGFEGGQ). Positions 23–35 (TSSGYGKTAGRGQ) are enriched in gly residues.

It belongs to the universal ribosomal protein uL15 family. In terms of assembly, part of the 50S ribosomal subunit.

Functionally, binds to the 23S rRNA. This chain is Large ribosomal subunit protein uL15, found in Lactobacillus gasseri (strain ATCC 33323 / DSM 20243 / BCRC 14619 / CIP 102991 / JCM 1131 / KCTC 3163 / NCIMB 11718 / NCTC 13722 / AM63).